A 420-amino-acid polypeptide reads, in one-letter code: Glucose-1-phosphate adenylyltransferase (420 aa).

Residues Tyr107, Gly172, 187–188 (EK), and Ser205 each bind alpha-D-glucose 1-phosphate.

This sequence belongs to the bacterial/plant glucose-1-phosphate adenylyltransferase family. As to quaternary structure, homotetramer.

It catalyses the reaction alpha-D-glucose 1-phosphate + ATP + H(+) = ADP-alpha-D-glucose + diphosphate. It participates in glycan biosynthesis; glycogen biosynthesis. Functionally, involved in the biosynthesis of ADP-glucose, a building block required for the elongation reactions to produce glycogen. Catalyzes the reaction between ATP and alpha-D-glucose 1-phosphate (G1P) to produce pyrophosphate and ADP-Glc. The sequence is that of Glucose-1-phosphate adenylyltransferase from Rhizobium rhizogenes (strain K84 / ATCC BAA-868) (Agrobacterium radiobacter).